Reading from the N-terminus, the 202-residue chain is Securin-2 (202 aa).

Positions 60 to 105 (TRKALGTVNRATEKSVKTNGPRKQKQPSFSAKKMTEKTVKTKSSVP) are disordered. The short motif at 61 to 64 (RKAL) is the D-box element. The short motif at 163–173 (PPSPVKMPSPP) is the SH3-binding element.

This sequence belongs to the securin family. As to expression, expressed at low levels in the pituitary, liver, spleen, prostate, testis, ovary, small intestine and colon. Also expressed in various pituitary, testicular, liver and ovarian tumors.

The protein localises to the cytoplasm. It is found in the nucleus. This is Securin-2 (PTTG2) from Homo sapiens (Human).